We begin with the raw amino-acid sequence, 526 residues long: MIPDVSKALSWLEAHPKVLCGIHRGIERETLRVTPDGHLAATGHPVELGKSLTHKWITTDFAESLLEFITPVDDNIDHTLHFLSDLHRYTARHLTNERMWPMSMPCFIEAEDKITLAQFGTSNVGRFKTLYREGLKNRYGALMQTISGVHYNFSLPIEFWQAWANITDEETGKEAISDGYLRLIRNYYRFGWIIPFFFGASPAICGSFLKGRKTNLPFENTPKGAKYLPYATSLRLSDLGYTNKSQSDLDITFNHLETYVKGLKKAIHKPSEEFAKLGVKKDGKYIQLNTNVLQIENELYAPIRPKRVVKGDESPSDALLRGGIEYIEVRSLDINPFTPIGVDETQIRFLDLFLIWCVLADAPEMNAEELACCRANWNNVILEGRKPGQVIGMGCGERKEPLAQVGKALFADLQRVAKVLDSCSGTKYLEVCLKLEEMFDNPQLTFSGRLLEKIKAQGIGGYGLSLAEEYHQQLVNTAYEVLTDDAFEHERISSIKRQADLEKSDTISFDEYLKLHAGPNNDGVAS.

This sequence belongs to the glutamate--cysteine ligase type 1 family. Type 1 subfamily.

The catalysed reaction is L-cysteine + L-glutamate + ATP = gamma-L-glutamyl-L-cysteine + ADP + phosphate + H(+). Its pathway is sulfur metabolism; glutathione biosynthesis; glutathione from L-cysteine and L-glutamate: step 1/2. This chain is Glutamate--cysteine ligase, found in Proteus mirabilis (strain HI4320).